The primary structure comprises 482 residues: Retinoic acid receptor beta (482 aa).

Residues 1–114 (MSTSSHACPV…PLPPPRVYKP (114 aa)) form a modulating region. At serine 104 the chain carries Phosphoserine. NR C4-type zinc fingers lie at residues 115–135 (CFVC…CEGC) and 151–175 (CHRD…LQKC). The segment at residues 115–180 (CFVCQDKSSG…RLQKCFEVGM (66 aa)) is a DNA-binding region (nuclear receptor). The tract at residues 181–209 (SKESVRNDRNKKKKEPSKQECTESYEMTA) is hinge. The NR LBD domain occupies 210-444 (ELDDLTEKIR…PLIQEMLENS (235 aa)). The interval 443–482 (NSEGHEPLTPSSSGNIAEHSPSVSPSSVENSGVSQSPLLQ) is disordered. The span at 462-482 (SPSVSPSSVENSGVSQSPLLQ) shows a compositional bias: low complexity.

The protein belongs to the nuclear hormone receptor family. NR1 subfamily. As to quaternary structure, homodimer. Heterodimer; with a RXR molecule. Binds DNA preferentially as a RAR/RXR heterodimer. Heterodimerizes (via NR LBD) with RXRA. Interacts weakly with NCOR2.

Its subcellular location is the nucleus. The protein resides in the cytoplasm. Receptor for retinoic acid. Retinoic acid receptors bind as heterodimers to their target response elements in response to their ligands, all-trans or 9-cis retinoic acid, and regulate gene expression in various biological processes. The RAR/RXR heterodimers bind to the retinoic acid response elements (RARE) composed of tandem 5'-AGGTCA-3' sites known as DR1-DR5. In the absence of ligand, acts mainly as an activator of gene expression due to weak binding to corepressors. The RXRA/RARB heterodimer can act as a repressor on the DR1 element and as an activator on the DR5 element. In concert with RARG, required for skeletal growth, matrix homeostasis and growth plate function. The polypeptide is Retinoic acid receptor beta (Rarb) (Mus musculus (Mouse)).